The chain runs to 451 residues: MREVISIHIGQAGIQVGNACWELYCLEHGIQPDGQMPSDKTIGGGDDAFNTFFSETGAGKHVPRCVFLDLEPTVIDEVRTGTYRQLFHPEQLISGKEDAANNFARGHYTIGKEIVDLCLDRIRKLADNCTGLQGFLVFNAVGGGTGSGLGSLLLERLSVDYGKKSKLGFTVYPSPQVSTAVVEPYNSVLSTHSLLEHTDVSVMLDNEAVYDICRRSLDIERPTYTNLNRLIAQVISSLTASLRFDGALNVDVTEFQTNLVPYPRIHFMLSSYSPVISAEKAYHEQLSVAEITNSAFEPASMMAKCDPRHGKYMACCLMYRGDVVPKDVNAAVATIKTKRTIQFVDWCPTGFKCGINYQPPTVVPGGDLAKVQRAVCMISNSTAIAEVFSRLDHKFDLMYAKRAFVHWYVGEGMEEGEFSEAREDLAALEKDYEEVGAESAEADGEDEGEEY.

Q11 contributes to the GTP binding site. K40 carries the N6-acetyllysine modification. Residues E71, G144, T145, T179, N206, and N228 each coordinate GTP. E71 lines the Mg(2+) pocket. E254 is a catalytic residue.

It belongs to the tubulin family. Dimer of alpha and beta chains. A typical microtubule is a hollow water-filled tube with an outer diameter of 25 nm and an inner diameter of 15 nM. Alpha-beta heterodimers associate head-to-tail to form protofilaments running lengthwise along the microtubule wall with the beta-tubulin subunit facing the microtubule plus end conferring a structural polarity. Microtubules usually have 13 protofilaments but different protofilament numbers can be found in some organisms and specialized cells. Requires Mg(2+) as cofactor. Post-translationally, undergoes a tyrosination/detyrosination cycle, the cyclic removal and re-addition of a C-terminal tyrosine residue by the enzymes tubulin tyrosine carboxypeptidase (TTCP) and tubulin tyrosine ligase (TTL), respectively. Acetylation of alpha chains at Lys-40 stabilizes microtubules and affects affinity and processivity of microtubule motors. This modification has a role in multiple cellular functions, ranging from cell motility, cell cycle progression or cell differentiation to intracellular trafficking and signaling.

The protein resides in the cytoplasm. Its subcellular location is the cytoskeleton. The enzyme catalyses GTP + H2O = GDP + phosphate + H(+). In terms of biological role, tubulin is the major constituent of microtubules, a cylinder consisting of laterally associated linear protofilaments composed of alpha- and beta-tubulin heterodimers. Microtubules grow by the addition of GTP-tubulin dimers to the microtubule end, where a stabilizing cap forms. Below the cap, tubulin dimers are in GDP-bound state, owing to GTPase activity of alpha-tubulin. The polypeptide is Tubulin alpha chain (TUBA) (Chlorella vulgaris (Green alga)).